The following is a 505-amino-acid chain: Phosphomevalonate kinase, peroxisomal (505 aa).

Ala2 bears the N-acetylalanine mark. Residues 57-65 (DVKLTSPQL) carry the Peroxisomal targeting signal PTS2 motif. 177–187 (VAKTGLGSSAA) is an ATP binding site.

It belongs to the GHMP kinase family. Mevalonate kinase subfamily.

The protein localises to the peroxisome. The catalysed reaction is (R)-5-phosphomevalonate + ATP = (R)-5-diphosphomevalonate + ADP. Its pathway is isoprenoid biosynthesis; isopentenyl diphosphate biosynthesis via mevalonate pathway; isopentenyl diphosphate from (R)-mevalonate: step 2/3. The protein is Phosphomevalonate kinase, peroxisomal of Arabidopsis thaliana (Mouse-ear cress).